Consider the following 966-residue polypeptide: Mitogen-activated protein kinase kinase kinase 13 (966 aa).

Disordered stretches follow at residues 1 to 22 and 93 to 112; these read MANF…SESK and SEMA…STSG. Over residues 96-112 the composition is skewed to polar residues; that stretch reads AVSQGNSNTVDAESTSG. A Protein kinase domain is found at 168 to 409; sequence ISELQWLGSG…FRQTLMHLDI (242 aa). Residues 174 to 182 and K195 contribute to the ATP site; that span reads LGSGAQGAV. The active-site Proton acceptor is the D279. Leucine-zipper regions lie at residues 433–454 and 486–507; these read VKKH…DEEL and LSAI…EQAV. Disordered stretches follow at residues 534 to 652, 744 to 834, 846 to 873, and 887 to 906; these read KRKG…SQSH, DIPS…RRQR, STFS…PDEL, and DLLS…SDGL. Over residues 567 to 581 the composition is skewed to low complexity; it reads SPLSGSPKMSTSSSK. Over residues 582-594 the composition is skewed to basic residues; the sequence is SRYRSKPRHRRGN. Composition is skewed to polar residues over residues 609–629 and 781–795; these read QPAQ…SQYP and FSSC…TSHL. Positions 814-827 are enriched in acidic residues; the sequence is DSSEEEEGEVDSEV. Positions 815–828 are acidic; the sequence is SSEEEEGEVDSEVE. Positions 846–855 are enriched in polar residues; that stretch reads STFSSENFSV.

Belongs to the protein kinase superfamily. STE Ser/Thr protein kinase family. MAP kinase kinase kinase subfamily. Homodimer; forms dimers through the leucine-zipper motif. Interacts with the C-terminus of MAPK8IP1 through the kinase catalytic domain. Binds PRDX3. Associates with the IKK complex through the kinase domain. Mg(2+) is required as a cofactor. In terms of processing, autophosphorylated on serine and threonine residues.

It is found in the cytoplasm. The protein resides in the membrane. It catalyses the reaction L-seryl-[protein] + ATP = O-phospho-L-seryl-[protein] + ADP + H(+). The enzyme catalyses L-threonyl-[protein] + ATP = O-phospho-L-threonyl-[protein] + ADP + H(+). Its activity is regulated as follows. Activated by autophosphorylation and homodimerization. Activates the JUN N-terminal pathway through activation of the MAP kinase kinase MAP2K7. Acts synergistically with PRDX3 to regulate the activation of NF-kappa-B in the cytosol. This activation is kinase-dependent and involves activating the IKK complex, the IKBKB-containing complex that phosphorylates inhibitors of NF-kappa-B. This chain is Mitogen-activated protein kinase kinase kinase 13, found in Pongo abelii (Sumatran orangutan).